The chain runs to 370 residues: UDP-N-acetylglucosamine--N-acetylmuramyl-(pentapeptide) pyrophosphoryl-undecaprenol N-acetylglucosamine transferase (370 aa).

UDP-N-acetyl-alpha-D-glucosamine is bound by residues 14–16, asparagine 125, arginine 168, serine 196, and glutamine 297; that span reads TGG.

Belongs to the glycosyltransferase 28 family. MurG subfamily.

The protein resides in the cell inner membrane. It carries out the reaction di-trans,octa-cis-undecaprenyl diphospho-N-acetyl-alpha-D-muramoyl-L-alanyl-D-glutamyl-meso-2,6-diaminopimeloyl-D-alanyl-D-alanine + UDP-N-acetyl-alpha-D-glucosamine = di-trans,octa-cis-undecaprenyl diphospho-[N-acetyl-alpha-D-glucosaminyl-(1-&gt;4)]-N-acetyl-alpha-D-muramoyl-L-alanyl-D-glutamyl-meso-2,6-diaminopimeloyl-D-alanyl-D-alanine + UDP + H(+). The protein operates within cell wall biogenesis; peptidoglycan biosynthesis. Cell wall formation. Catalyzes the transfer of a GlcNAc subunit on undecaprenyl-pyrophosphoryl-MurNAc-pentapeptide (lipid intermediate I) to form undecaprenyl-pyrophosphoryl-MurNAc-(pentapeptide)GlcNAc (lipid intermediate II). The sequence is that of UDP-N-acetylglucosamine--N-acetylmuramyl-(pentapeptide) pyrophosphoryl-undecaprenol N-acetylglucosamine transferase from Nitrobacter hamburgensis (strain DSM 10229 / NCIMB 13809 / X14).